A 312-amino-acid polypeptide reads, in one-letter code: MRIIFMGTPEFACPTLQKLIDRKEEVVAVITQPDRPRGRGQQTLPPPVKVLAEQHGIPVMQPVKVRVPEVVESIRELAPDLIVVVAFGQILPKSLLDIPPYGCINVHASLLPRWRGAAPLNWCIIDGDTETGVTTMMMDVGLDTGDMLLKKTTSIDPDENTQSLHDRLSIIGADALAETLDLLNAGKLVREKQDDALTCYASMLKKEDGLIDWSRDPRSVKNLVRGMTPWPGTYTFLDGKMLKVYRVRIAEGEGEPGTVIGAGRQGLEVACTGGSVIIEELQLEGKKRLPAGDFLAGYKIATGAKLGHKDAA.

Residue 109-112 (SLLP) participates in (6S)-5,6,7,8-tetrahydrofolate binding.

The protein belongs to the Fmt family.

The catalysed reaction is L-methionyl-tRNA(fMet) + (6R)-10-formyltetrahydrofolate = N-formyl-L-methionyl-tRNA(fMet) + (6S)-5,6,7,8-tetrahydrofolate + H(+). Attaches a formyl group to the free amino group of methionyl-tRNA(fMet). The formyl group appears to play a dual role in the initiator identity of N-formylmethionyl-tRNA by promoting its recognition by IF2 and preventing the misappropriation of this tRNA by the elongation apparatus. The chain is Methionyl-tRNA formyltransferase from Geotalea daltonii (strain DSM 22248 / JCM 15807 / FRC-32) (Geobacter daltonii).